We begin with the raw amino-acid sequence, 1030 residues long: Kinesin-related protein 6 (1030 aa).

The SAM domain maps to F3–Q66. 2 disordered regions span residues Q66–M164 and R178–D308. Residues P68–S80 are compositionally biased toward polar residues. Low complexity-rich tracts occupy residues N81–N117, T125–M164, Y181–S197, and Q225–D238. The segment covering F239–D290 has biased composition (acidic residues). Residues R453–L775 enclose the Kinesin motor domain. G543–T550 provides a ligand contact to ATP. 3 stretches are compositionally biased toward low complexity: residues I826–P839, Q849–P906, and P981–Q1009. Disordered regions lie at residues I826 to F915 and P981 to N1030.

Belongs to the TRAFAC class myosin-kinesin ATPase superfamily. Kinesin family.

The protein resides in the cytoplasm. It localises to the cytoskeleton. In terms of biological role, microtubule-associated force-producing protein that plays a role in organelle transport. Its motor activity is directed toward the microtubule's plus end. This Dictyostelium discoideum (Social amoeba) protein is Kinesin-related protein 6 (kif6).